Consider the following 277-residue polypeptide: Phosphate import ATP-binding protein PstB (277 aa).

An ABC transporter domain is found at I31–I272. G63–S70 serves as a coordination point for ATP.

This sequence belongs to the ABC transporter superfamily. Phosphate importer (TC 3.A.1.7) family. As to quaternary structure, the complex is composed of two ATP-binding proteins (PstB), two transmembrane proteins (PstC and PstA) and a solute-binding protein (PstS).

The protein resides in the cell inner membrane. The enzyme catalyses phosphate(out) + ATP + H2O = ADP + 2 phosphate(in) + H(+). Its function is as follows. Part of the ABC transporter complex PstSACB involved in phosphate import. Responsible for energy coupling to the transport system. The sequence is that of Phosphate import ATP-binding protein PstB from Pseudomonas fluorescens (strain Pf0-1).